Here is a 178-residue protein sequence, read N- to C-terminus: Endoribonuclease YbeY (178 aa).

Histidine 118, histidine 122, and histidine 128 together coordinate Zn(2+). The segment at 156-178 is disordered; the sequence is YQQDRQDERDRRLLDKSRYFDEP. The span at 159-178 shows a compositional bias: basic and acidic residues; the sequence is DRQDERDRRLLDKSRYFDEP.

Belongs to the endoribonuclease YbeY family. Requires Zn(2+) as cofactor.

Its subcellular location is the cytoplasm. Its function is as follows. Single strand-specific metallo-endoribonuclease involved in late-stage 70S ribosome quality control and in maturation of the 3' terminus of the 16S rRNA. The polypeptide is Endoribonuclease YbeY (Mycobacterium marinum (strain ATCC BAA-535 / M)).